Consider the following 404-residue polypeptide: Phosphopentomutase (404 aa).

Mn(2+) contacts are provided by D10, D297, H302, D338, H339, and H350.

This sequence belongs to the phosphopentomutase family. Requires Mn(2+) as cofactor.

The protein localises to the cytoplasm. It catalyses the reaction 2-deoxy-alpha-D-ribose 1-phosphate = 2-deoxy-D-ribose 5-phosphate. The enzyme catalyses alpha-D-ribose 1-phosphate = D-ribose 5-phosphate. It participates in carbohydrate degradation; 2-deoxy-D-ribose 1-phosphate degradation; D-glyceraldehyde 3-phosphate and acetaldehyde from 2-deoxy-alpha-D-ribose 1-phosphate: step 1/2. Functionally, isomerase that catalyzes the conversion of deoxy-ribose 1-phosphate (dRib-1-P) and ribose 1-phosphate (Rib-1-P) to deoxy-ribose 5-phosphate (dRib-5-P) and ribose 5-phosphate (Rib-5-P), respectively. The sequence is that of Phosphopentomutase from Colwellia psychrerythraea (strain 34H / ATCC BAA-681) (Vibrio psychroerythus).